We begin with the raw amino-acid sequence, 137 residues long: Large ribosomal subunit protein uL16 (137 aa).

It belongs to the universal ribosomal protein uL16 family. Part of the 50S ribosomal subunit.

Functionally, binds 23S rRNA and is also seen to make contacts with the A and possibly P site tRNAs. The protein is Large ribosomal subunit protein uL16 of Methylobacterium sp. (strain 4-46).